Consider the following 493-residue polypeptide: MNRVAVVVLGDIGRSPRMQYHSMSLSKLENTKVTLIGYRESEPHPQIVNNDSITIEPLKPFPISMSNSFKKIPLISIFMWPLLAICKVLFQIIQLMYVLLVKVPSPLNTILVQSPPAIPTIFVMQIVCWIRGVHLVIDWHNLGYTLLKLSLSKSDNHPIIRLAKFIERYFAKNAYAHLFVTNEMKIQLVRDWNLKGKTFVFHDKASPIFKSLTDREQEEFLKTFINKYSIKGEDKVYIESVISKKSIRNPKQQTSIIISSTSWTQDEDFSILLDAIVKYDIEHAINNNNNKVEEAQDESVVLAENLLFIITGKGPQKEYYQEKINSLSLKKSRIITVWLDSEDYPKLLACCDLGVSLHNSSSGIDLPMKVVDMFGCCLPVLAIDFKCIGELVKVNYNGFLFKDSDQLHQLLNQLFTHPTNNNTITNTNNNKNLILEKMRKNLTKDRETDTWESNWLTIKPLFIPSSSSSSSSSSSSSSSSSSSSSSNSKSKKD.

Over 1–71 (MNRVAVVVLG…PISMSNSFKK (71 aa)) the chain is Lumenal. The helical transmembrane segment at 72–92 (IPLISIFMWPLLAICKVLFQI) threads the bilayer. The Cytoplasmic segment spans residues 93–109 (IQLMYVLLVKVPSPLNT). Positions 110 to 130 (ILVQSPPAIPTIFVMQIVCWI) form an intramembrane region, helical. Residues 131-493 (RGVHLVIDWH…SSSNSKSKKD (363 aa)) lie on the Cytoplasmic side of the membrane. The tract at residues 462 to 493 (FIPSSSSSSSSSSSSSSSSSSSSSSNSKSKKD) is disordered. Over residues 465–493 (SSSSSSSSSSSSSSSSSSSSSSNSKSKKD) the composition is skewed to low complexity.

It belongs to the glycosyltransferase group 1 family. Glycosyltransferase 33 subfamily.

It localises to the endoplasmic reticulum membrane. The catalysed reaction is an N,N'-diacetylchitobiosyl-diphospho-di-trans,poly-cis-dolichol + GDP-alpha-D-mannose = a beta-D-Man-(1-&gt;4)-beta-D-GlcNAc-(1-&gt;4)-alpha-D-GlcNAc-diphospho-di-trans,poly-cis-dolichol + GDP + H(+). The protein operates within protein modification; protein glycosylation. Its function is as follows. Participates in the formation of the lipid-linked precursor oligosaccharide for N-glycosylation. Involved in assembling the dolichol-pyrophosphate-GlcNAc(2)-Man(5) intermediate on the cytoplasmic surface of the ER. This chain is Chitobiosyldiphosphodolichol beta-mannosyltransferase (alg1), found in Dictyostelium discoideum (Social amoeba).